The following is a 395-amino-acid chain: Protein pelota (395 aa).

The short motif at 210–212 (PGF) is the PGF motif element. The interval 371–395 (PELEDSDDDDDEDGAAGGVADSDSD) is disordered. Residues 372–384 (ELEDSDDDDDEDG) are compositionally biased toward acidic residues.

It belongs to the eukaryotic release factor 1 family. Pelota subfamily. Component of the Pelota-HBS1L complex, also named Dom34-Hbs1 complex, composed of pelo and HBS1. Interacts with Pink1 and Cnot4; the interaction with Cnot4 appears to be Pink1-dependent. It depends on a divalent metal cation as a cofactor. As to expression, expressed in ovaries and muscles (at protein level). Expressed throughout all development stages.

The protein localises to the nucleus. Its subcellular location is the cytoplasm. Functionally, component of the Pelota-HBS1L complex, a complex that recognizes stalled ribosomes and triggers the No-Go Decay (NGD) pathway. In the Pelota-HBS1L complex, pelo recognizes ribosomes stalled at the 3' end of an mRNA and engages stalled ribosomes by destabilizing mRNA in the mRNA channel. Following ribosome-binding, the Pelota-HBS1L complex promotes recruitment of pix, which drives the disassembly of stalled ribosomes, followed by degradation of damaged mRNAs as part of the NGD pathway. Required prior to the first meiotic division for spindle formation and nuclear envelope breakdown during spermatogenesis. Together with HBS1, promotes spermatid individualization during spermatogenesis. Required for ovarian germ line stem cell self-renewal and oocyte development during oogenesis. Together with HSB1, required for transposon silencing in the ovary and testis. As part of the Pink1-regulated signaling, is recruited to damaged mitochondrial and is required for recruitment of autophagy receptors and induction of mitophagy. Required for normal eye patterning and for mitotic divisions in the ovary. The chain is Protein pelota (pelo) from Drosophila melanogaster (Fruit fly).